A 312-amino-acid chain; its full sequence is Coiled-coil domain-containing protein 160 homolog (312 aa).

Positions 126 to 281 (SEGAKFKNQL…EERKREKTHS (156 aa)) form a coiled coil.

The protein belongs to the CCDC160 family.

In Xenopus tropicalis (Western clawed frog), this protein is Coiled-coil domain-containing protein 160 homolog.